A 366-amino-acid chain; its full sequence is Ferredoxin--NADP reductase (366 aa).

Positions 51, 59, 64, 104, 139, 308, and 349 each coordinate FAD.

It belongs to the ferredoxin--NADP reductase type 2 family. In terms of assembly, homodimer. FAD is required as a cofactor.

The enzyme catalyses 2 reduced [2Fe-2S]-[ferredoxin] + NADP(+) + H(+) = 2 oxidized [2Fe-2S]-[ferredoxin] + NADPH. In Methylibium petroleiphilum (strain ATCC BAA-1232 / LMG 22953 / PM1), this protein is Ferredoxin--NADP reductase.